The primary structure comprises 702 residues: Elongation factor G (702 aa).

Residues 8–290 form the tr-type G domain; sequence CQYRNIGISA…AIIEYLPAPN (283 aa). GTP contacts are provided by residues 17–24, 88–92, and 142–145; these read AHIDAGKT, DTPGH, and NKMD.

Belongs to the TRAFAC class translation factor GTPase superfamily. Classic translation factor GTPase family. EF-G/EF-2 subfamily.

It localises to the cytoplasm. Functionally, catalyzes the GTP-dependent ribosomal translocation step during translation elongation. During this step, the ribosome changes from the pre-translocational (PRE) to the post-translocational (POST) state as the newly formed A-site-bound peptidyl-tRNA and P-site-bound deacylated tRNA move to the P and E sites, respectively. Catalyzes the coordinated movement of the two tRNA molecules, the mRNA and conformational changes in the ribosome. The protein is Elongation factor G of Buchnera aphidicola subsp. Schizaphis graminum (strain Sg).